A 202-amino-acid polypeptide reads, in one-letter code: Small ribosomal subunit protein uS4c (202 aa).

A disordered region spans residues 20–43; it reads GLTRKTTRRNSRPGQHGDQPRKPS. Residues 90 to 152 enclose the S4 RNA-binding domain; that stretch reads MRLDNIVFRL…ARSKQLVENY (63 aa).

This sequence belongs to the universal ribosomal protein uS4 family. In terms of assembly, part of the 30S ribosomal subunit. Contacts protein S5. The interaction surface between S4 and S5 is involved in control of translational fidelity.

Its subcellular location is the plastid. The protein localises to the chloroplast. In terms of biological role, one of the primary rRNA binding proteins, it binds directly to 16S rRNA where it nucleates assembly of the body of the 30S subunit. Its function is as follows. With S5 and S12 plays an important role in translational accuracy. This is Small ribosomal subunit protein uS4c (rps4) from Rhodomonas salina (Cryptomonas salina).